A 258-amino-acid chain; its full sequence is L-2,3-butanediol dehydrogenase (258 aa).

NAD(+)-binding positions include 12-14 (QGI), Asp33, Gln37, 61-62 (DV), Asn88, Tyr154, Lys158, and 184-189 (PGIVGT). Tyr154 acts as the Proton acceptor in catalysis.

This sequence belongs to the short-chain dehydrogenases/reductases (SDR) family. As to quaternary structure, homotetramer.

The enzyme catalyses (S,S)-butane-2,3-diol + NAD(+) = (S)-acetoin + NADH + H(+). It carries out the reaction (S)-acetoin + NAD(+) = diacetyl + NADH + H(+). With respect to regulation, slightly activated by Ba(2+), Ca(2+), Mn(2+), Mg(2+), and Co(2+), while Hg(2+) and Cu(2+) cause marked inhibition of the activity. Ni(2+), Zn(2+) and Cd(2+) have no effect on the catalytic activity. Is also slightly inhibited by lactate, pyruvate, succinate, acetate and formate. Its function is as follows. Catalyzes the reversible reduction of (S)-acetoin to (S,S)-butane-2,3-diol (L-BD) in the presence of NADH. To a lesser extent, can also catalyze the irreversible reduction of diacetyl to (S)-acetoin. Cannot oxidize meso-BD, D-BD, 2-butanol, 1,2-propanediol, ethanol, acetol, 1,2-butanediol, 1,3-butanediol, n-butanol, and n-propanol. Cannot reduce (R)-acetoin, acetol, dihydroxyacetone and 2,4-pentanedione. The protein is L-2,3-butanediol dehydrogenase of Corynebacterium glutamicum (Brevibacterium saccharolyticum).